The following is a 202-amino-acid chain: Protein EMBRYO DEFECTIVE 514 (202 aa).

Disordered regions lie at residues 1 to 69 and 168 to 202; these read MAEE…PVKL and MKTP…RFRR. Residue Ala2 is modified to N-acetylalanine. Composition is skewed to basic and acidic residues over residues 33–42 and 51–65; these read ETGDEKRERE and GESK…EKSG. The segment covering 174-202 has biased composition (gly residues); sequence NGNGHGGGRGGGGGRRGGRGGGRGGRFRR.

In terms of tissue distribution, expressed in leaves, flowers and embryos at globular stage.

It is found in the nucleus. In terms of biological role, may play a role in ribosome biogenesis and in determining the rate of cell division. Involved in a process essential for nuclear and nucleolar functions. In Arabidopsis thaliana (Mouse-ear cress), this protein is Protein EMBRYO DEFECTIVE 514.